Consider the following 281-residue polypeptide: Acyl-[acyl-carrier-protein]--UDP-N-acetylglucosamine O-acyltransferase (281 aa).

The protein belongs to the transferase hexapeptide repeat family. LpxA subfamily. As to quaternary structure, homotrimer.

The protein resides in the cytoplasm. The enzyme catalyses a (3R)-hydroxyacyl-[ACP] + UDP-N-acetyl-alpha-D-glucosamine = a UDP-3-O-[(3R)-3-hydroxyacyl]-N-acetyl-alpha-D-glucosamine + holo-[ACP]. It participates in glycolipid biosynthesis; lipid IV(A) biosynthesis; lipid IV(A) from (3R)-3-hydroxytetradecanoyl-[acyl-carrier-protein] and UDP-N-acetyl-alpha-D-glucosamine: step 1/6. In terms of biological role, involved in the biosynthesis of lipid A, a phosphorylated glycolipid that anchors the lipopolysaccharide to the outer membrane of the cell. This Rickettsia bellii (strain OSU 85-389) protein is Acyl-[acyl-carrier-protein]--UDP-N-acetylglucosamine O-acyltransferase.